The chain runs to 334 residues: Ornithine carbamoyltransferase, catabolic (334 aa).

Carbamoyl phosphate contacts are provided by residues S57 to T60, Q84, R108, and H135 to Q138. L-ornithine-binding positions include N168, D232, and S236–M237. Residues C274 to L275 and R321 contribute to the carbamoyl phosphate site.

The protein belongs to the aspartate/ornithine carbamoyltransferase superfamily. OTCase family.

The protein localises to the cytoplasm. It carries out the reaction carbamoyl phosphate + L-ornithine = L-citrulline + phosphate + H(+). It participates in amino-acid degradation; L-arginine degradation via ADI pathway; carbamoyl phosphate from L-arginine: step 2/2. Its function is as follows. Reversibly catalyzes the transfer of the carbamoyl group from carbamoyl phosphate (CP) to the N(epsilon) atom of ornithine (ORN) to produce L-citrulline. The chain is Ornithine carbamoyltransferase, catabolic (arcB) from Avibacterium paragallinarum (Haemophilus gallinarum).